The chain runs to 76 residues: MDFKRVKDYLSWLYYQYQIISCCAVLEPWEQSMFNTIILTIFAMVVYTAYVFIPIHIRLAWEFFSKMCGYHSTISN.

The Cytoplasmic portion of the chain corresponds to 1-11 (MDFKRVKDYLS). The helical transmembrane segment at 12 to 29 (WLYYQYQIISCCAVLEPW) threads the bilayer. The Lumenal portion of the chain corresponds to 30-36 (EQSMFNT). A helical membrane pass occupies residues 37 to 57 (IILTIFAMVVYTAYVFIPIHI). Topologically, residues 58–76 (RLAWEFFSKMCGYHSTISN) are cytoplasmic.

Belongs to the SPTSS family. SPTSSB subfamily. As to quaternary structure, component of the serine palmitoyltransferase (SPT) complex, which is composed of SPTLC1, SPTLC2 or SPTLC3 and SPTSSA or SPTSSB. The heterodimer consisting of SPTLC1 and SPTLC2/SPTLC3 forms the catalytic core of the enzyme, while SPTSSA or SPTSSB subunits determine substrate specificity. SPT also interacts with ORMDL proteins, especially ORMDL3, which negatively regulate SPT activity in the presence of ceramides.

It is found in the endoplasmic reticulum membrane. Its pathway is lipid metabolism; sphingolipid metabolism. Functionally, component of the serine palmitoyltransferase multisubunit enzyme (SPT) that catalyzes the initial and rate-limiting step in sphingolipid biosynthesis by condensing L-serine and activated acyl-CoA (most commonly palmitoyl-CoA) to form long-chain bases. The SPT complex is composed of SPTLC1, SPTLC2 or SPTLC3 and SPTSSA or SPTSSB. Within this complex, the heterodimer consisting of SPTLC1 and SPTLC2/SPTLC3 forms the catalytic core. Within the SPT complex, SPTSSB stimulates the catalytic activity and plays a role in substrate specificity. SPT complexes with this subunit showing a preference for longer acyl-CoAs. The SPTLC1-SPTLC2-SPTSSB complex shows a strong preference for C18-CoA substrate, while the SPTLC1-SPTLC3-SPTSSB isozyme displays an ability to use a broader range of acyl-CoAs, without apparent preference. The polypeptide is Serine palmitoyltransferase small subunit B (SPTSSB) (Bos taurus (Bovine)).